Reading from the N-terminus, the 301-residue chain is uncharacterized protein (301 aa).

Positions 1–22 are cleaved as a signal peptide; the sequence is MPGRFTVALVIALGGTCGVADA. In terms of domain architecture, GP-PDE spans 31–300; that stretch reads PMIVAHRAGT…DSPLAAQQWR (270 aa).

This is an uncharacterized protein from Mycobacterium tuberculosis (strain ATCC 25618 / H37Rv).